A 556-amino-acid polypeptide reads, in one-letter code: WD repeat-containing protein srw1 (556 aa).

A disordered region spans residues 1 to 80; sequence MDEFDGFTRP…NEGDRFIPSR (80 aa). Low complexity predominate over residues 12–37; sequence SSNSSANRNSNNSMNRVENNNSNSDS. Over residues 43 to 55 the composition is skewed to basic and acidic residues; sequence SRGDAHTRMRQGF. Ser62 is modified (phosphoserine). Residues 69 to 78 show a composition bias toward basic and acidic residues; that stretch reads RTNEGDRFIP. A Phosphothreonine modification is found at Thr98. Over residues 126–146 the composition is skewed to polar residues; it reads TFNNSPIATPNTTIGVSTPRT. Residues 126-173 are disordered; sequence TFNNSPIATPNTTIGVSTPRTDSGIDDIELTQRTPPSSSHTSSSILQN. Residues 159 to 169 show a composition bias toward low complexity; it reads TPPSSSHTSSS. Thr177 bears the Phosphothreonine mark. Ser187 and Ser214 each carry phosphoserine. 7 WD repeats span residues 246–285, 289–328, 331–368, 372–411, 414–456, 458–499, and 502–541; these read GLAG…VTVM, YPTD…KTRT, GHTE…HYFR, AHRQ…PLYS, NHIA…MLHN, DTGS…RVGT, and GHTD…SKHS.

This sequence belongs to the WD repeat CDC20/Fizzy family. Phosphorylated by cdc2-cdc13-CDK complex. This targets srw1 for proteolysis which in turn promotes cdc13 turnover. Dephosphorylated during G1 arrest.

Its subcellular location is the nucleus. Its function is as follows. Has a role in cell differentiation and cell cycling by negatively regulating cig2 and cdc12-associated cdc2. Down-regulates the level of cdc13, particularly in a nitrogen deprived environment. Regulator of cell cycle G1 phase progression. Prevents onset of mitosis during the pre-Start G1 period. Required for degradation of cdc13 mitotic cyclin B during G1 arrest but not during mitotic exit. This chain is WD repeat-containing protein srw1 (srw1), found in Schizosaccharomyces pombe (strain 972 / ATCC 24843) (Fission yeast).